The primary structure comprises 98 residues: Prostate and testis expressed protein 3 (98 aa).

A signal peptide spans 1–20 (MNKHFLLLFSLFYFIVEATS). The UPAR/Ly6 domain occupies 21-97 (LKCVTCHLRT…CCNSDFCNFR (77 aa)). Intrachain disulfides connect Cys23–Cys50, Cys26–Cys35, Cys42–Cys68, and Cys72–Cys88.

This sequence belongs to the PATE family.

It localises to the secreted. This is Prostate and testis expressed protein 3 (Pate3) from Mus musculus (Mouse).